The primary structure comprises 195 residues: Thymidylate kinase (195 aa).

Residue 7–14 coordinates ATP; sequence GIDGSGKT.

Belongs to the thymidylate kinase family.

The enzyme catalyses dTMP + ATP = dTDP + ADP. Functionally, phosphorylation of dTMP to form dTDP in both de novo and salvage pathways of dTTP synthesis. This is Thymidylate kinase (tmk) from Aquifex aeolicus (strain VF5).